We begin with the raw amino-acid sequence, 548 residues long: Thermolysin (548 aa).

A signal peptide spans 1–28 (MKMKMKLASFGLAAGLAAQVFLPYNALA). Residues 29 to 232 (STEHVTWNQQ…DAAKPGDVKS (204 aa)) constitute a propeptide, activation peptide. Residues Asp-289, Asp-291, Gln-293, and Asp-370 each contribute to the Ca(2+) site. Residue His-374 coordinates Zn(2+). Residue Glu-375 is part of the active site. His-378 and Glu-398 together coordinate Zn(2+). The Ca(2+) site is built by Glu-409, Asn-415, Asp-417, Glu-419, Glu-422, Tyr-425, Thr-426, Ile-429, and Asp-432. His-463 acts as the Proton donor in catalysis.

It belongs to the peptidase M4 family. It depends on Ca(2+) as a cofactor. Requires Zn(2+) as cofactor.

The protein localises to the secreted. It carries out the reaction Preferential cleavage: Xaa-|-Leu &gt; Xaa-|-Phe.. Its function is as follows. Extracellular zinc metalloprotease. The sequence is that of Thermolysin (npr) from Bacillus thermoproteolyticus.